A 292-amino-acid polypeptide reads, in one-letter code: Hydroxysqualene synthase (292 aa).

It belongs to the phytoene/squalene synthase family. HpnC subfamily.

It carries out the reaction presqualene diphosphate + H2O = hydroxysqualene + diphosphate. It functions in the pathway secondary metabolite biosynthesis; hopanoid biosynthesis. Functionally, involved in the biosynthesis of the hopanoid precursor squalene (SQ) from farnesyl diphosphate (FPP). Catalyzes the second step, the conversion of presqualene diphosphate (PSPP) to hydroxysqualene (HSQ). This chain is Hydroxysqualene synthase, found in Rhodopseudomonas palustris (strain ATCC BAA-98 / CGA009).